Consider the following 45-residue polypeptide: Large ribosomal subunit protein bL34 (45 aa).

This sequence belongs to the bacterial ribosomal protein bL34 family.

The chain is Large ribosomal subunit protein bL34 from Streptomyces avermitilis (strain ATCC 31267 / DSM 46492 / JCM 5070 / NBRC 14893 / NCIMB 12804 / NRRL 8165 / MA-4680).